The primary structure comprises 353 residues: Serine/threonine-protein phosphatase 2A activator 1 (353 aa).

Residues Ala331 to Arg353 form a disordered region. Over residues Ser343–Arg353 the composition is skewed to polar residues.

Belongs to the PTPA-type PPIase family.

It localises to the cytoplasm. The protein resides in the nucleus. It catalyses the reaction [protein]-peptidylproline (omega=180) = [protein]-peptidylproline (omega=0). In terms of biological role, PPIases accelerate the folding of proteins. It catalyzes the cis-trans isomerization of proline imidic peptide bonds in oligopeptides. Acts as a regulatory subunit for PP2A-like phosphatases modulating their activity or substrate specificity, probably by inducing a conformational change in the catalytic subunit, a direct target of the PPIase. Can reactivate inactive phosphatase PP2A-phosphatase methylesterase complexes (PP2Ai) in presence of ATP and Mg(2+) by dissociating the inactive form from the complex. The polypeptide is Serine/threonine-protein phosphatase 2A activator 1 (RRD1) (Kluyveromyces lactis (strain ATCC 8585 / CBS 2359 / DSM 70799 / NBRC 1267 / NRRL Y-1140 / WM37) (Yeast)).